Consider the following 301-residue polypeptide: Acetylglutamate kinase (301 aa).

Residues 68-69 (GG), arginine 90, and asparagine 195 each bind substrate.

This sequence belongs to the acetylglutamate kinase family. ArgB subfamily.

It localises to the cytoplasm. It catalyses the reaction N-acetyl-L-glutamate + ATP = N-acetyl-L-glutamyl 5-phosphate + ADP. It functions in the pathway amino-acid biosynthesis; L-arginine biosynthesis; N(2)-acetyl-L-ornithine from L-glutamate: step 2/4. Its function is as follows. Catalyzes the ATP-dependent phosphorylation of N-acetyl-L-glutamate. The polypeptide is Acetylglutamate kinase (Pseudomonas putida (strain GB-1)).